The chain runs to 120 residues: uncharacterized protein (120 aa).

This is an uncharacterized protein from Enterobacteria phage T4 (Bacteriophage T4).